Here is a 100-residue protein sequence, read N- to C-terminus: Integration host factor subunit alpha (100 aa).

Belongs to the bacterial histone-like protein family. Heterodimer of an alpha and a beta chain.

This protein is one of the two subunits of integration host factor, a specific DNA-binding protein that functions in genetic recombination as well as in transcriptional and translational control. The sequence is that of Integration host factor subunit alpha from Ruegeria sp. (strain TM1040) (Silicibacter sp.).